Consider the following 164-residue polypeptide: Cytochrome c-type biogenesis protein CcmE (164 aa).

The Cytoplasmic portion of the chain corresponds to 1-8 (MNPRRKSR). Residues 9 to 29 (LYLAVVVLIGIGLTTTLVLYA) form a helical; Signal-anchor for type II membrane protein membrane-spanning segment. Over 30-164 (LRSNIDLFYT…NSTAAQGNAS (135 aa)) the chain is Periplasmic. The heme site is built by histidine 130 and tyrosine 134. Over residues 131 to 150 (DEKYTPPEVKEAMKENHTRP) the composition is skewed to basic and acidic residues. The interval 131–164 (DEKYTPPEVKEAMKENHTRPAEAYNSTAAQGNAS) is disordered. The segment covering 154 to 164 (YNSTAAQGNAS) has biased composition (polar residues).

Belongs to the CcmE/CycJ family.

The protein resides in the cell inner membrane. Heme chaperone required for the biogenesis of c-type cytochromes. Transiently binds heme delivered by CcmC and transfers the heme to apo-cytochromes in a process facilitated by CcmF and CcmH. The chain is Cytochrome c-type biogenesis protein CcmE from Yersinia enterocolitica serotype O:8 / biotype 1B (strain NCTC 13174 / 8081).